The chain runs to 196 residues: Putative AAA family ATPase L572 (196 aa).

32–39 (NAVNCKET) contributes to the ATP binding site.

This sequence belongs to the AAA ATPase family.

In Acanthamoeba polyphaga mimivirus (APMV), this protein is Putative AAA family ATPase L572.